We begin with the raw amino-acid sequence, 254 residues long: Splicing factor tls1 (254 aa).

The span at 69-83 (KEKQLNTANEPHEAN) shows a compositional bias: basic and acidic residues. Disordered regions lie at residues 69–90 (KEKQ…SAQS) and 195–216 (RKRQ…LRTS). Residues 195–204 (RKRQKKRARM) are compositionally biased toward basic residues. The span at 205-216 (KEKLDSKALRTS) shows a compositional bias: basic and acidic residues.

This sequence belongs to the TLS1 family. As to quaternary structure, component of the spliceosome. Interacts with brr2.

It is found in the cytoplasm. It localises to the nucleus. Its function is as follows. Plays a role in pre-mRNA splicing by facilitating excision of introns featuring long spacing between the branchpoint and 3'-splice site. Assists the splicing of several components involved in chromatin organization, such as several shelterin complex subunits. The protein is Splicing factor tls1 of Schizosaccharomyces pombe (strain 972 / ATCC 24843) (Fission yeast).